We begin with the raw amino-acid sequence, 185 residues long: MADRILVARIGAPHGVRGEVRLFVFTEDPGAVLDYDPLTDATGKKRFRIAALRAAKDHFVARIEGIADRTAAEALTNLDLFVPREALPPPDDDDTFYHADLIGLDVVDEAGVVIGKVVALQDFGAGDILEYAPTLPATKAKTLMVPFSKDAVPVVDVPGRRVVVAEAFVERRPAEPEEGEDTGGE.

In terms of domain architecture, PRC barrel spans 92 to 168; that stretch reads DDDTFYHADL…GRRVVVAEAF (77 aa).

Belongs to the RimM family. Binds ribosomal protein uS19.

It localises to the cytoplasm. Functionally, an accessory protein needed during the final step in the assembly of 30S ribosomal subunit, possibly for assembly of the head region. Essential for efficient processing of 16S rRNA. May be needed both before and after RbfA during the maturation of 16S rRNA. It has affinity for free ribosomal 30S subunits but not for 70S ribosomes. This chain is Ribosome maturation factor RimM, found in Xanthobacter autotrophicus (strain ATCC BAA-1158 / Py2).